Reading from the N-terminus, the 693-residue chain is Heat shock protein homolog SSE1 (693 aa).

A disordered region spans residues 665-693 (LAEKLAAQRKAESEKKESKADAEGDVELD). Positions 673–686 (RKAESEKKESKADA) are enriched in basic and acidic residues.

This sequence belongs to the heat shock protein 70 family.

It is found in the cytoplasm. This chain is Heat shock protein homolog SSE1 (SSE1), found in Lachancea kluyveri (strain ATCC 58438 / CBS 3082 / BCRC 21498 / NBRC 1685 / JCM 7257 / NCYC 543 / NRRL Y-12651) (Yeast).